We begin with the raw amino-acid sequence, 449 residues long: Exodeoxyribonuclease 7 large subunit (449 aa).

Belongs to the XseA family. Heterooligomer composed of large and small subunits.

It is found in the cytoplasm. It catalyses the reaction Exonucleolytic cleavage in either 5'- to 3'- or 3'- to 5'-direction to yield nucleoside 5'-phosphates.. Bidirectionally degrades single-stranded DNA into large acid-insoluble oligonucleotides, which are then degraded further into small acid-soluble oligonucleotides. The polypeptide is Exodeoxyribonuclease 7 large subunit (Salmonella dublin (strain CT_02021853)).